The primary structure comprises 319 residues: Ataxin-3 homolog (319 aa).

The Josephin domain maps to 8–179 (ISSIFFERQQ…NSEADDFITL (172 aa)). Residue Cys-21 is the Nucleophile of the active site. Catalysis depends on His-118, which acts as the Proton acceptor. The active site involves Asn-133. 2 UIM domains span residues 218 to 237 (QEDR…KESS) and 242 to 261 (SDED…DPNI). Residues 253–319 (MSLSQDPNIP…EKKSQNVPEE (67 aa)) are disordered. A compositionally biased stretch (polar residues) spans 254-267 (SLSQDPNIPSTSAA). Positions 295-313 (QQRRDRAKFLEKLEEEKKS) are enriched in basic and acidic residues. An interaction with cdc-48.1 and cdc-48.2 region spans residues 297-300 (RRDR).

As to quaternary structure, forms a complex composed of deubiquitinating enzyme atx-3, adapter ubxn-5 and cdc-48.1. Forms a complex composed of deubiquitinating enzyme atx-3, E4 ubiquitin-protein ligase ufd-2 and cdc-48.1. Interacts (via RRDR motif) with cdc-48.1 (via N-terminus) and cdc-48.2 (via N-terminus); the interaction with cdc-48.1 is not required for atx-3 enzymatic activity. Interacts (via C-terminus) with ubxn-5. May interact with ned-8.

It is found in the cytoplasm. The protein resides in the nucleus. It localises to the nucleolus. It catalyses the reaction Thiol-dependent hydrolysis of ester, thioester, amide, peptide and isopeptide bonds formed by the C-terminal Gly of ubiquitin (a 76-residue protein attached to proteins as an intracellular targeting signal).. In terms of biological role, acts as a chain editing deubiquitinating enzyme that binds and cleaves 'Lys-48'-linked polyubiquitin chains, with a preference for chains containing four or more ubiquitin molecules thereby modulating protein degradation by the ubiquitin-proteasome pathway. Probably by regulating the IGF-1-insulin-like pathway, regulates lifespan. Regulates germline DNA double-strand-break repair and apoptosis in response to DNA damage by recruiting E4 ubiquitin-protein ligase ufd-2 to DNA repair foci. Interacts with key regulators of transcription and represses transcription. Acts as a histone-binding protein that regulates transcription. This is Ataxin-3 homolog from Caenorhabditis briggsae.